A 376-amino-acid polypeptide reads, in one-letter code: MLRALKGHVESPLIVVTRAASTNAEKLEEIRERLAKGPNFQDFVQNPDYSKSEWENYEGKLRREKGEEQRLRLPPWLKTTIPMGKNYAKIKNQLRELKLSTVCEEARCPNIGECWGGGEHGTQTATIMLMGDTCTRGCRFCSVKTARKPPPLDENEPVNTATAIASWGLDYIVLTSVDRDDLPDGGSKHIAKTVKEIKARNSNIFVECLVPDFRGDLGCVETIANCGLDVYAHNIETVEKLTPYVRDRRAHYRQTLKVLSEAKRFNPNLITKSSIMLGLGETDEEVENTLKDLREAGVDCITLGQYMQPTNKHLKVIEYVTPEKFKHWEDRGNQLGFLYTASGPLVRSSYKAGEFFITSILENRKKRQALNSKPEQ.

[4Fe-4S] cluster is bound by residues cysteine 103, cysteine 108, cysteine 114, cysteine 134, cysteine 138, cysteine 141, and serine 349. The 220-residue stretch at 119 to 338 (EHGTQTATIM…EDRGNQLGFL (220 aa)) folds into the Radical SAM core domain.

This sequence belongs to the radical SAM superfamily. Lipoyl synthase family. Requires [4Fe-4S] cluster as cofactor.

The protein localises to the mitochondrion. It carries out the reaction [[Fe-S] cluster scaffold protein carrying a second [4Fe-4S](2+) cluster] + N(6)-octanoyl-L-lysyl-[protein] + 2 oxidized [2Fe-2S]-[ferredoxin] + 2 S-adenosyl-L-methionine + 4 H(+) = [[Fe-S] cluster scaffold protein] + N(6)-[(R)-dihydrolipoyl]-L-lysyl-[protein] + 4 Fe(3+) + 2 hydrogen sulfide + 2 5'-deoxyadenosine + 2 L-methionine + 2 reduced [2Fe-2S]-[ferredoxin]. It participates in protein modification; protein lipoylation via endogenous pathway; protein N(6)-(lipoyl)lysine from octanoyl-[acyl-carrier-protein]: step 2/2. In terms of biological role, catalyzes the radical-mediated insertion of two sulfur atoms into the C-6 and C-8 positions of the octanoyl moiety bound to the lipoyl domains of lipoate-dependent enzymes, thereby converting the octanoylated domains into lipoylated derivatives. In Drosophila ananassae (Fruit fly), this protein is Lipoyl synthase, mitochondrial.